The following is a 206-amino-acid chain: LexA repressor (206 aa).

Positions 28 to 48 form a DNA-binding region, H-T-H motif; that stretch reads RAEIARELGFRSANAAEEHLK. Active-site for autocatalytic cleavage activity residues include S123 and K160.

It belongs to the peptidase S24 family. Homodimer.

It catalyses the reaction Hydrolysis of Ala-|-Gly bond in repressor LexA.. In terms of biological role, represses a number of genes involved in the response to DNA damage (SOS response), including recA and lexA. In the presence of single-stranded DNA, RecA interacts with LexA causing an autocatalytic cleavage which disrupts the DNA-binding part of LexA, leading to derepression of the SOS regulon and eventually DNA repair. This is LexA repressor from Vibrio atlanticus (strain LGP32) (Vibrio splendidus (strain Mel32)).